Here is a 560-residue protein sequence, read N- to C-terminus: Putative transport protein VIBHAR_02636 (560 aa).

Transmembrane regions (helical) follow at residues L8–G28, L37–F57, F66–F86, H91–S111, and V164–L184. 2 RCK C-terminal domains span residues L205–G292 and K293–F376. Transmembrane regions (helical) follow at residues L386–F406, V409–L429, L450–H470, I478–A498, S505–V525, and A539–L559.

This sequence belongs to the AAE transporter (TC 2.A.81) family. YbjL subfamily.

The protein resides in the cell membrane. In Vibrio campbellii (strain ATCC BAA-1116), this protein is Putative transport protein VIBHAR_02636.